The chain runs to 470 residues: UDP-N-acetylmuramoylalanine--D-glutamate ligase (470 aa).

121-127 (GTNGKST) lines the ATP pocket.

It belongs to the MurCDEF family.

Its subcellular location is the cytoplasm. It carries out the reaction UDP-N-acetyl-alpha-D-muramoyl-L-alanine + D-glutamate + ATP = UDP-N-acetyl-alpha-D-muramoyl-L-alanyl-D-glutamate + ADP + phosphate + H(+). It functions in the pathway cell wall biogenesis; peptidoglycan biosynthesis. Cell wall formation. Catalyzes the addition of glutamate to the nucleotide precursor UDP-N-acetylmuramoyl-L-alanine (UMA). In Rhizobium johnstonii (strain DSM 114642 / LMG 32736 / 3841) (Rhizobium leguminosarum bv. viciae), this protein is UDP-N-acetylmuramoylalanine--D-glutamate ligase.